The sequence spans 252 residues: uncharacterized protein (252 aa).

16-40 (LVTGASDGIGREAAMTYARYGATVI) lines the NADP(+) pocket. Position 152 (serine 152) interacts with substrate. The active-site Proton acceptor is the tyrosine 165.

The protein belongs to the short-chain dehydrogenases/reductases (SDR) family.

This is an uncharacterized protein from Escherichia coli (strain K12).